Here is a 438-residue protein sequence, read N- to C-terminus: sn-glycerol-3-phosphate-binding periplasmic protein UgpB (438 aa).

A signal peptide spans methionine 1–alanine 23. Tyrosine 65, glutamate 89, serine 144, serine 270, glycine 307, tyrosine 346, and arginine 397 together coordinate sn-glycerol 3-phosphate.

The protein belongs to the bacterial solute-binding protein 1 family. The complex is composed of two ATP-binding proteins (UgpC), two transmembrane proteins (UgpA and UgpE) and a solute-binding protein (UgpB).

Its subcellular location is the periplasm. Part of the ABC transporter complex UgpBAEC involved in sn-glycerol-3-phosphate (G3P) import. Binds G3P. The polypeptide is sn-glycerol-3-phosphate-binding periplasmic protein UgpB (ugpB) (Escherichia coli O6:K15:H31 (strain 536 / UPEC)).